A 736-amino-acid polypeptide reads, in one-letter code: ABC transporter G family member 16 (736 aa).

In terms of domain architecture, ABC transporter spans 88–332 (LDFHDLVPWR…FAGFGNPIPE (245 aa)). 125 to 132 (GASGSGKS) lines the ATP pocket. The next 7 membrane-spanning stretches (helical) occupy residues 410–430 (SVIN…PFWI), 449–469 (LLGM…TVFW), 484–504 (FFAF…PVFL), 525–545 (VLSH…AFAV), 569–589 (ASFW…PHVM), 590–610 (LGYT…GFFI), and 709–729 (LLIT…CLLL). Residues 430–640 (IEIKTLTRRS…PYEAVLQNEF (211 aa)) form the ABC transmembrane type-2 domain.

The protein belongs to the ABC transporter superfamily. ABCG family. Eye pigment precursor importer (TC 3.A.1.204) subfamily.

Its subcellular location is the membrane. In Arabidopsis thaliana (Mouse-ear cress), this protein is ABC transporter G family member 16 (ABCG16).